The primary structure comprises 240 residues: UDP-2,3-diacylglucosamine hydrolase (240 aa).

Residues D8, H10, D41, N79, and H114 each contribute to the Mn(2+) site. A substrate-binding site is contributed by 79–80 (NR). Substrate is bound by residues D122, S160, N164, K167, and H195. Mn(2+) is bound by residues H195 and H197.

The protein belongs to the LpxH family. It depends on Mn(2+) as a cofactor.

The protein resides in the cell inner membrane. It carries out the reaction UDP-2-N,3-O-bis[(3R)-3-hydroxytetradecanoyl]-alpha-D-glucosamine + H2O = 2-N,3-O-bis[(3R)-3-hydroxytetradecanoyl]-alpha-D-glucosaminyl 1-phosphate + UMP + 2 H(+). It functions in the pathway glycolipid biosynthesis; lipid IV(A) biosynthesis; lipid IV(A) from (3R)-3-hydroxytetradecanoyl-[acyl-carrier-protein] and UDP-N-acetyl-alpha-D-glucosamine: step 4/6. Hydrolyzes the pyrophosphate bond of UDP-2,3-diacylglucosamine to yield 2,3-diacylglucosamine 1-phosphate (lipid X) and UMP by catalyzing the attack of water at the alpha-P atom. Involved in the biosynthesis of lipid A, a phosphorylated glycolipid that anchors the lipopolysaccharide to the outer membrane of the cell. The sequence is that of UDP-2,3-diacylglucosamine hydrolase from Salmonella schwarzengrund (strain CVM19633).